The following is a 423-amino-acid chain: G-protein coupled receptor 83 (423 aa).

An N-terminal signal peptide occupies residues 1–16; the sequence is MVPHLLLLCLLPLVRA. Residues 18-71 lie on the Extracellular side of the membrane; that stretch reads EPHEGRADEQSAEAALAVPNASHFFSWNNYTFSDWQNFVGRRRYGAESQNPTVK. N-linked (GlcNAc...) asparagine glycans are attached at residues Asn-37 and Asn-46. Residues 72 to 92 traverse the membrane as a helical segment; that stretch reads ALLIVAYSFIIVFSLFGNVLV. Over 93–107 the chain is Cytoplasmic; the sequence is CHVIFKNQRMHSATS. The helical transmembrane segment at 108-129 threads the bilayer; sequence LFIVNLAVADIMITLLNTPFTL. The Extracellular segment spans residues 130 to 145; it reads VRFVNSTWIFGKGMCH. N-linked (GlcNAc...) asparagine glycosylation is present at Asn-134. Cys-144 and Cys-224 form a disulfide bridge. The helical transmembrane segment at 146-167 threads the bilayer; it reads VSRFAQYCSLHVSALTLTAIAV. Topologically, residues 168-186 are cytoplasmic; sequence DRHQVIMHPLKPRISITKG. The helical transmembrane segment at 187–208 threads the bilayer; it reads VIYIAVIWTMATFFSLPHAICQ. Topologically, residues 209-238 are extracellular; the sequence is KLFTFKYSEDIVRSLCLPDFPEPADLFWKY. Residues 239 to 260 traverse the membrane as a helical segment; the sequence is LDLATFILLYILPLLIISVAYA. Over 261–293 the chain is Cytoplasmic; sequence RVAKKLWLCNMIGDVTTEQYFALRRKKKKTIKM. Residues 294 to 315 form a helical membrane-spanning segment; sequence LMLVVVLFALCWFPLNCYVLLL. The Extracellular portion of the chain corresponds to 316–327; sequence SSKVIRTNNALY. Residues 328–348 traverse the membrane as a helical segment; the sequence is FAFHWFAMSSTCYNPFIYCWL. At 349-423 the chain is on the cytoplasmic side; that stretch reads NENFRIELKA…SSVEPIVTMS (75 aa). Residues 402-414 show a composition bias toward polar residues; sequence PTSQLQSGKTDLS. Residues 402–423 form a disordered region; that stretch reads PTSQLQSGKTDLSSVEPIVTMS.

It belongs to the G-protein coupled receptor 1 family. In terms of tissue distribution, highly expressed in the brain and spinal cord, and found in lower concentrations in the thymus and other tissues.

The protein localises to the cell membrane. Functionally, G-protein coupled receptor for PEN, a neuropeptide produced from the precursor protein, proSAAS (encoded by PCSK1N). Acts through a G(i)- and G(q)-alpha-alpha-mediated pathway in response to PEN. Plays a role in food intake and body weight regulation. May contribute to the regulation of anxiety-related behaviors. The protein is G-protein coupled receptor 83 of Homo sapiens (Human).